The primary structure comprises 159 residues: uncharacterized protein (159 aa).

A compositionally biased stretch (basic and acidic residues) spans Met-1 to Glu-13. The segment at Met-1–Pro-35 is disordered.

This is an uncharacterized protein from Homo sapiens (Human).